The following is a 476-amino-acid chain: Bifunctional protein HldE (476 aa).

The ribokinase stretch occupies residues 1–319 (MKPTLPNYDQ…EAIHGSQDSG (319 aa)). Residue 195–198 (NMLE) participates in ATP binding. The active site involves Asp-264. The tract at residues 344 to 476 (MTNGCFDILH…IIEAIKGGRG (133 aa)) is cytidylyltransferase.

In the N-terminal section; belongs to the carbohydrate kinase PfkB family. It in the C-terminal section; belongs to the cytidylyltransferase family. As to quaternary structure, homodimer.

The enzyme catalyses D-glycero-beta-D-manno-heptose 7-phosphate + ATP = D-glycero-beta-D-manno-heptose 1,7-bisphosphate + ADP + H(+). It carries out the reaction D-glycero-beta-D-manno-heptose 1-phosphate + ATP + H(+) = ADP-D-glycero-beta-D-manno-heptose + diphosphate. It participates in nucleotide-sugar biosynthesis; ADP-L-glycero-beta-D-manno-heptose biosynthesis; ADP-L-glycero-beta-D-manno-heptose from D-glycero-beta-D-manno-heptose 7-phosphate: step 1/4. Its pathway is nucleotide-sugar biosynthesis; ADP-L-glycero-beta-D-manno-heptose biosynthesis; ADP-L-glycero-beta-D-manno-heptose from D-glycero-beta-D-manno-heptose 7-phosphate: step 3/4. Catalyzes the phosphorylation of D-glycero-D-manno-heptose 7-phosphate at the C-1 position to selectively form D-glycero-beta-D-manno-heptose-1,7-bisphosphate. Its function is as follows. Catalyzes the ADP transfer from ATP to D-glycero-beta-D-manno-heptose 1-phosphate, yielding ADP-D-glycero-beta-D-manno-heptose. This Aliivibrio fischeri (strain ATCC 700601 / ES114) (Vibrio fischeri) protein is Bifunctional protein HldE.